The primary structure comprises 537 residues: NAD(P)H-quinone oxidoreductase chain 4 3 (537 aa).

Helical transmembrane passes span 6 to 26, 36 to 56, 87 to 107, 115 to 135, 136 to 156, 169 to 189, 209 to 229, 243 to 263, 277 to 297, 314 to 334, 335 to 355, 387 to 407, and 417 to 437; these read FPWLTAIIALPLVAALAIPII, WYGLGVAFADFALMIAAFWHY, LSMPLLLLTGLINTLAIFAAW, LFYGLMLVMYSAQLGVFVAQD, LLLFFLMWEIELVPVYLLISI, FILYTAAASIFILVAGFALAF, AIELLAYAGFLIAFGVKLPIF, SAPGSMILAGVLLKMGGYALI, FAPVLAILGVVNIVYGACCAF, MGFVLIGLASYTEIGVSGAVL, QMVSHGLVAASLFFLTGVTYE, LALPGMSGFVGELMVFIGIAT, and VVVVLLSAVGVILTPIYLLSL.

It belongs to the complex I subunit 4 family.

It is found in the cellular thylakoid membrane. It carries out the reaction a plastoquinone + NADH + (n+1) H(+)(in) = a plastoquinol + NAD(+) + n H(+)(out). It catalyses the reaction a plastoquinone + NADPH + (n+1) H(+)(in) = a plastoquinol + NADP(+) + n H(+)(out). NDH-1 shuttles electrons from NAD(P)H, via FMN and iron-sulfur (Fe-S) centers, to quinones in the respiratory chain. The immediate electron acceptor for the enzyme in this species is believed to be plastoquinone. Couples the redox reaction to proton translocation (for every two electrons transferred, four hydrogen ions are translocated across the cytoplasmic membrane), and thus conserves the redox energy in a proton gradient. The protein is NAD(P)H-quinone oxidoreductase chain 4 3 of Trichormus variabilis (strain ATCC 29413 / PCC 7937) (Anabaena variabilis).